The following is a 196-amino-acid chain: Peptide methionine sulfoxide reductase (196 aa).

Positions 1–14 (MEGNNSSSKSTTNP) are enriched in polar residues. The segment at 1 to 23 (MEGNNSSSKSTTNPALDPDLDSP) is disordered.

Belongs to the MsrA Met sulfoxide reductase family.

It catalyses the reaction L-methionyl-[protein] + [thioredoxin]-disulfide + H2O = L-methionyl-(S)-S-oxide-[protein] + [thioredoxin]-dithiol. The catalysed reaction is [thioredoxin]-disulfide + L-methionine + H2O = L-methionine (S)-S-oxide + [thioredoxin]-dithiol. Its function is as follows. Has an important function as a repair enzyme for proteins that have been inactivated by oxidation. Catalyzes the reversible oxidation-reduction of methionine sulfoxide in proteins to methionine. This is Peptide methionine sulfoxide reductase (E4) from Solanum lycopersicum (Tomato).